A 500-amino-acid chain; its full sequence is Probable malate:quinone oxidoreductase (500 aa).

Belongs to the MQO family. Requires FAD as cofactor.

The catalysed reaction is (S)-malate + a quinone = a quinol + oxaloacetate. It functions in the pathway carbohydrate metabolism; tricarboxylic acid cycle; oxaloacetate from (S)-malate (quinone route): step 1/1. The polypeptide is Probable malate:quinone oxidoreductase (Bacillus cereus (strain ZK / E33L)).